The chain runs to 445 residues: Probable carboxypeptidase UREG_07869 (445 aa).

The first 17 residues, 1 to 17 (MKSLILTTLALLPLVSC), serve as a signal peptide directing secretion. A Zn(2+)-binding site is contributed by Asp-165. The active-site Proton acceptor is the Glu-197. Glu-198 lines the Zn(2+) pocket.

It belongs to the peptidase M20A family. Zn(2+) is required as a cofactor.

It is found in the secreted. The chain is Probable carboxypeptidase UREG_07869 from Uncinocarpus reesii (strain UAMH 1704).